Reading from the N-terminus, the 393-residue chain is Short-chain dehydrogenase/reductase family 42E member 1 (393 aa).

Tyr-152 (proton acceptor) is an active-site residue. Lys-156 is a binding site for NAD(+). The next 2 membrane-spanning stretches (helical) occupy residues 282-302 and 371-391; these read LPLT…FILG and GLLV…SVIL.

This sequence belongs to the 3-beta-HSD family.

The protein localises to the membrane. This Homo sapiens (Human) protein is Short-chain dehydrogenase/reductase family 42E member 1 (SDR42E1).